We begin with the raw amino-acid sequence, 953 residues long: Glycine dehydrogenase (decarboxylating) (953 aa).

At lysine 705 the chain carries N6-(pyridoxal phosphate)lysine.

The protein belongs to the GcvP family. As to quaternary structure, the glycine cleavage system is composed of four proteins: P, T, L and H. Pyridoxal 5'-phosphate is required as a cofactor.

It catalyses the reaction N(6)-[(R)-lipoyl]-L-lysyl-[glycine-cleavage complex H protein] + glycine + H(+) = N(6)-[(R)-S(8)-aminomethyldihydrolipoyl]-L-lysyl-[glycine-cleavage complex H protein] + CO2. Its function is as follows. The glycine cleavage system catalyzes the degradation of glycine. The P protein binds the alpha-amino group of glycine through its pyridoxal phosphate cofactor; CO(2) is released and the remaining methylamine moiety is then transferred to the lipoamide cofactor of the H protein. The protein is Glycine dehydrogenase (decarboxylating) of Sodalis glossinidius (strain morsitans).